Here is a 316-residue protein sequence, read N- to C-terminus: Aspartate carbamoyltransferase catalytic subunit (316 aa).

Residues Arg58 and Thr59 each contribute to the carbamoyl phosphate site. Position 86 (Lys86) interacts with L-aspartate. Carbamoyl phosphate-binding residues include Arg108, His136, and Gln139. 2 residues coordinate L-aspartate: Arg169 and Arg223. Carbamoyl phosphate-binding residues include Gly265 and Pro266.

This sequence belongs to the aspartate/ornithine carbamoyltransferase superfamily. ATCase family. Heterododecamer (2C3:3R2) of six catalytic PyrB chains organized as two trimers (C3), and six regulatory PyrI chains organized as three dimers (R2).

The enzyme catalyses carbamoyl phosphate + L-aspartate = N-carbamoyl-L-aspartate + phosphate + H(+). It participates in pyrimidine metabolism; UMP biosynthesis via de novo pathway; (S)-dihydroorotate from bicarbonate: step 2/3. In terms of biological role, catalyzes the condensation of carbamoyl phosphate and aspartate to form carbamoyl aspartate and inorganic phosphate, the committed step in the de novo pyrimidine nucleotide biosynthesis pathway. The chain is Aspartate carbamoyltransferase catalytic subunit from Anaeromyxobacter sp. (strain Fw109-5).